The primary structure comprises 361 residues: Phosphoribosylformylglycinamidine cyclo-ligase (361 aa).

It belongs to the AIR synthase family.

It is found in the cytoplasm. It carries out the reaction 2-formamido-N(1)-(5-O-phospho-beta-D-ribosyl)acetamidine + ATP = 5-amino-1-(5-phospho-beta-D-ribosyl)imidazole + ADP + phosphate + H(+). The protein operates within purine metabolism; IMP biosynthesis via de novo pathway; 5-amino-1-(5-phospho-D-ribosyl)imidazole from N(2)-formyl-N(1)-(5-phospho-D-ribosyl)glycinamide: step 2/2. The chain is Phosphoribosylformylglycinamidine cyclo-ligase from Bartonella henselae (strain ATCC 49882 / DSM 28221 / CCUG 30454 / Houston 1) (Rochalimaea henselae).